Reading from the N-terminus, the 25-residue chain is Antifungal protein 1 (25 aa).

Positions 1 to 25 (QSERFEQQMQGQDFSHDERFLSQAA) are disordered. Over residues 14–25 (FSHDERFLSQAA) the composition is skewed to basic and acidic residues.

The protein belongs to the 2S seed storage albumins family. Expressed in seed (at protein level). Not detected in pulp, stems and leaves.

Its function is as follows. Has strong antifungal activity against T.harzianum, F.oxysporum and A.fumigatus with IC(50) values of 32 ug/ml, 34 ug/ml and 40 ug/ml, restectively. Lacks antifungal activity against R.solani, P.brasiliensis and C.albicans. The polypeptide is Antifungal protein 1 (Passiflora edulis (Passion fruit)).